Here is a 252-residue protein sequence, read N- to C-terminus: Type III pantothenate kinase (252 aa).

ATP is bound at residue 6–13; that stretch reads DIGNTSTA. 104–107 lines the substrate pocket; sequence GADR. Asp-106 functions as the Proton acceptor in the catalytic mechanism. Asp-128 contacts K(+). ATP is bound at residue Thr-131. Thr-183 contacts substrate.

The protein belongs to the type III pantothenate kinase family. In terms of assembly, homodimer. NH4(+) is required as a cofactor. K(+) serves as cofactor.

The protein resides in the cytoplasm. It catalyses the reaction (R)-pantothenate + ATP = (R)-4'-phosphopantothenate + ADP + H(+). It functions in the pathway cofactor biosynthesis; coenzyme A biosynthesis; CoA from (R)-pantothenate: step 1/5. Catalyzes the phosphorylation of pantothenate (Pan), the first step in CoA biosynthesis. The polypeptide is Type III pantothenate kinase (Thermus thermophilus (strain ATCC 27634 / DSM 579 / HB8)).